A 453-amino-acid polypeptide reads, in one-letter code: Ribulose bisphosphate carboxylase large chain (453 aa).

A propeptide spanning residues 1-2 is cleaved from the precursor; that stretch reads MS. The residue at position 3 (P3) is an N-acetylproline. Residue K14 is modified to N6,N6,N6-trimethyllysine. Residues N123 and T173 each coordinate substrate. K175 acts as the Proton acceptor in catalysis. K177 lines the substrate pocket. 3 residues coordinate Mg(2+): K201, D203, and E204. N6-carboxylysine is present on K201. The Proton acceptor role is filled by H294. Residues R295, H327, and S379 each coordinate substrate.

It belongs to the RuBisCO large chain family. Type I subfamily. As to quaternary structure, heterohexadecamer of 8 large chains and 8 small chains; disulfide-linked. The disulfide link is formed within the large subunit homodimers. Mg(2+) is required as a cofactor. The disulfide bond which can form in the large chain dimeric partners within the hexadecamer appears to be associated with oxidative stress and protein turnover.

It localises to the plastid. Its subcellular location is the chloroplast. It carries out the reaction 2 (2R)-3-phosphoglycerate + 2 H(+) = D-ribulose 1,5-bisphosphate + CO2 + H2O. The catalysed reaction is D-ribulose 1,5-bisphosphate + O2 = 2-phosphoglycolate + (2R)-3-phosphoglycerate + 2 H(+). RuBisCO catalyzes two reactions: the carboxylation of D-ribulose 1,5-bisphosphate, the primary event in carbon dioxide fixation, as well as the oxidative fragmentation of the pentose substrate in the photorespiration process. Both reactions occur simultaneously and in competition at the same active site. The sequence is that of Ribulose bisphosphate carboxylase large chain from Valantia muralis (Wall valantia).